The sequence spans 600 residues: RNA-binding protein 47 (600 aa).

Residues 1–25 (MTAEDSASAVAMSNPSPSSSSKSSS) are compositionally biased toward low complexity. Residues 1–37 (MTAEDSASAVAMSNPSPSSSSKSSSGHPQHHCTVPEG) form a disordered region. 3 consecutive RRM domains span residues 82 to 160 (CEIF…SSVD), 162 to 244 (CRLF…WAEP), and 257 to 329 (KILY…LAKP).

Belongs to the RRM RBM47 family. Homodimer. May interact with MAVS; may regulate MAVS lysosomal degradation.

It is found in the nucleus. The protein localises to the cytoplasm. Single-stranded RNA-binding protein that functions in a variety of RNA processes, including alternative splicing, RNA stabilization, and RNA editing. Independently of its RNA-binding activity, could negatively regulate MAVS by promoting its lysosomal degradation. In Danio rerio (Zebrafish), this protein is RNA-binding protein 47 (rbm47).